We begin with the raw amino-acid sequence, 339 residues long: GDP-fucose transporter 1 (339 aa).

8 consecutive transmembrane segments (helical) span residues 9-29 (SVRI…LVFL), 45-65 (LFVT…LSLL), 82-102 (LSVA…ITFN), 111-133 (VSFY…YVIL), 136-156 (STSY…LMGV), 165-185 (ISYS…LNAI), 209-229 (ACFL…VAHF), and 237-257 (FWLM…ITGL). Positions 319-339 (AHTIQASKDDKALQEDGQTKV) are disordered. Residues 325–339 (SKDDKALQEDGQTKV) are compositionally biased toward basic and acidic residues.

This sequence belongs to the TPT transporter family. SLC35C subfamily.

Its subcellular location is the golgi apparatus membrane. The catalysed reaction is GMP(out) + GDP-beta-L-fucose(in) = GMP(in) + GDP-beta-L-fucose(out). Functionally, antiporter specific for GDP-l-fucose and depending on the concomitant reverse transport of GMP. Involved in GDP-fucose import from the cytoplasm into the Golgi lumen. In Nematostella vectensis (Starlet sea anemone), this protein is GDP-fucose transporter 1 (slc35c1).